Reading from the N-terminus, the 353-residue chain is Uroporphyrinogen decarboxylase (353 aa).

Substrate-binding positions include 29 to 33, aspartate 78, tyrosine 154, serine 209, and histidine 322; that span reads RQAGR.

The protein belongs to the uroporphyrinogen decarboxylase family. In terms of assembly, homodimer.

It localises to the cytoplasm. The catalysed reaction is uroporphyrinogen III + 4 H(+) = coproporphyrinogen III + 4 CO2. It participates in porphyrin-containing compound metabolism; protoporphyrin-IX biosynthesis; coproporphyrinogen-III from 5-aminolevulinate: step 4/4. In terms of biological role, catalyzes the decarboxylation of four acetate groups of uroporphyrinogen-III to yield coproporphyrinogen-III. This chain is Uroporphyrinogen decarboxylase, found in Bacillus velezensis (strain DSM 23117 / BGSC 10A6 / LMG 26770 / FZB42) (Bacillus amyloliquefaciens subsp. plantarum).